The sequence spans 360 residues: Bifunctional protein FolD 4, chloroplastic (360 aa).

The N-terminal 51 residues, 1-51 (MASMMFTDCSSTTTSRLIHLNRSSGTFLLRQCVGQLRLQTTASGRGCCIRS), are a transit peptide targeting the chloroplast. Ser52 carries the N-acetylserine modification.

It belongs to the tetrahydrofolate dehydrogenase/cyclohydrolase family. In terms of assembly, homodimer.

It localises to the plastid. Its subcellular location is the chloroplast. The enzyme catalyses (6R)-5,10-methylene-5,6,7,8-tetrahydrofolate + NADP(+) = (6R)-5,10-methenyltetrahydrofolate + NADPH. It carries out the reaction (6R)-5,10-methenyltetrahydrofolate + H2O = (6R)-10-formyltetrahydrofolate + H(+). It functions in the pathway one-carbon metabolism; tetrahydrofolate interconversion. Functionally, catalyzes the oxidation of 5,10-methylenetetrahydrofolate to 5,10-methenyltetrahydrofolate and then the hydrolysis of 5,10-methenyltetrahydrofolate to 10-formyltetrahydrofolate. This chain is Bifunctional protein FolD 4, chloroplastic (FOLD4), found in Arabidopsis thaliana (Mouse-ear cress).